Here is a 632-residue protein sequence, read N- to C-terminus: tRNA uridine 5-carboxymethylaminomethyl modification enzyme MnmG (632 aa).

Residues 13–18, valine 125, and serine 180 each bind FAD; that span reads GGGHAG. 273–287 provides a ligand contact to NAD(+); sequence GPRYCPSIEDKVVRF. Glutamine 370 contributes to the FAD binding site.

Belongs to the MnmG family. In terms of assembly, homodimer. Heterotetramer of two MnmE and two MnmG subunits. FAD serves as cofactor.

It localises to the cytoplasm. In terms of biological role, NAD-binding protein involved in the addition of a carboxymethylaminomethyl (cmnm) group at the wobble position (U34) of certain tRNAs, forming tRNA-cmnm(5)s(2)U34. The chain is tRNA uridine 5-carboxymethylaminomethyl modification enzyme MnmG from Nitrosospira multiformis (strain ATCC 25196 / NCIMB 11849 / C 71).